A 21-amino-acid chain; its full sequence is Fibrinogen beta chain (21 aa).

Over residues 1 to 11 (EFPTDYDEGED) the composition is skewed to acidic residues. Residues 1–21 (EFPTDYDEGEDDRPKVGLGAR) form a disordered region. Sulfotyrosine is present on Tyr6.

As to quaternary structure, heterohexamer; disulfide linked. Contains 2 sets of 3 non-identical chains (alpha, beta and gamma). The 2 heterotrimers are in head to head conformation with the N-termini in a small central domain. Conversion of fibrinogen to fibrin is triggered by thrombin, which cleaves fibrinopeptides A and B from alpha and beta chains, and thus exposes the N-terminal polymerization sites responsible for the formation of the soft clot.

It is found in the secreted. In terms of biological role, cleaved by the protease thrombin to yield monomers which, together with fibrinogen alpha (FGA) and fibrinogen gamma (FGG), polymerize to form an insoluble fibrin matrix. Fibrin has a major function in hemostasis as one of the primary components of blood clots. In addition, functions during the early stages of wound repair to stabilize the lesion and guide cell migration during re-epithelialization. Was originally thought to be essential for platelet aggregation, based on in vitro studies using anticoagulated blood. However subsequent studies have shown that it is not absolutely required for thrombus formation in vivo. Enhances expression of SELP in activated platelets. Maternal fibrinogen is essential for successful pregnancy. Fibrin deposition is also associated with infection, where it protects against IFNG-mediated hemorrhage. May also facilitate the antibacterial immune response via both innate and T-cell mediated pathways. The chain is Fibrinogen beta chain (FGB) from Bison bonasus (European bison).